A 110-amino-acid polypeptide reads, in one-letter code: Cytochrome c6 (110 aa).

An N-terminal signal peptide occupies residues 1–25 (MKKKLSVLFTVFSFFVIGFAQIAFA). The heme c site is built by Cys39, Cys42, His43, and Met83.

It belongs to the cytochrome c family. PetJ subfamily. As to quaternary structure, monomer. Post-translationally, binds 1 heme c group covalently per subunit.

It is found in the plastid. The protein localises to the chloroplast thylakoid lumen. Functionally, functions as an electron carrier between membrane-bound cytochrome b6-f and photosystem I in oxygenic photosynthesis. The polypeptide is Cytochrome c6 (petJ) (Pyropia yezoensis (Susabi-nori)).